We begin with the raw amino-acid sequence, 228 residues long: ATP-dependent dethiobiotin synthetase BioD 1 (228 aa).

13–18 (EVGKTV) is a binding site for ATP. Thr17 is a Mg(2+) binding site. Lys38 is an active-site residue. Ser42 is a binding site for substrate. ATP is bound by residues Asp55, 116 to 119 (EGAG), 176 to 177 (ND), and 205 to 207 (PWL). Asp55 and Glu116 together coordinate Mg(2+).

Belongs to the dethiobiotin synthetase family. Homodimer. The cofactor is Mg(2+).

It localises to the cytoplasm. The enzyme catalyses (7R,8S)-7,8-diammoniononanoate + CO2 + ATP = (4R,5S)-dethiobiotin + ADP + phosphate + 3 H(+). It participates in cofactor biosynthesis; biotin biosynthesis; biotin from 7,8-diaminononanoate: step 1/2. Its function is as follows. Catalyzes a mechanistically unusual reaction, the ATP-dependent insertion of CO2 between the N7 and N8 nitrogen atoms of 7,8-diaminopelargonic acid (DAPA, also called 7,8-diammoniononanoate) to form a ureido ring. This chain is ATP-dependent dethiobiotin synthetase BioD 1, found in Salmonella typhimurium (strain LT2 / SGSC1412 / ATCC 700720).